We begin with the raw amino-acid sequence, 51 residues long: Conotoxin Cal6.33 (51 aa).

Residues 1–22 form the signal peptide; sequence MKLTCVVIIAVLILTACQFTTA. Intrachain disulfides connect C25–C39, C32–C43, and C38–C50.

This sequence belongs to the conotoxin O1 superfamily. In terms of tissue distribution, expressed by the venom duct.

The protein resides in the secreted. In terms of biological role, probable neurotoxin. This chain is Conotoxin Cal6.33, found in Californiconus californicus (California cone).